Consider the following 422-residue polypeptide: 5-hydroxytryptamine receptor 1A (422 aa).

The disordered stretch occupies residues 1–23; it reads MDVLSPGQGNNTTSPPAPFETGG. The Extracellular portion of the chain corresponds to 1-38; sequence MDVLSPGQGNNTTSPPAPFETGGNTTGISDVTFSYQVI. N-linked (GlcNAc...) asparagine glycans are attached at residues Asn10, Asn11, and Asn24. Residues 39–59 form a helical membrane-spanning segment; that stretch reads TSLLLGTLIFCAVLGNACVVA. The Cytoplasmic portion of the chain corresponds to 60-73; it reads AIALERSLQNVANY. The helical transmembrane segment at 74-98 threads the bilayer; sequence LIGSLAVTDLMVSVLVLPMAALYQV. Residues 99–107 lie on the Extracellular side of the membrane; it reads LNKWTLGQV. Residues 108 to 132 form a helical membrane-spanning segment; the sequence is TCDLFIALDVLCCTSSILHLCAIAL. Residues Cys109 and Cys187 are joined by a disulfide bond. Residues Asp116 and Cys120 each coordinate serotonin. The DRY motif; important for ligand-induced conformation changes motif lies at 133-135; the sequence is DRY. Over 133-152 the chain is Cytoplasmic; the sequence is DRYWAITDPIDYVNKRTPRR. A helical membrane pass occupies residues 153-174; the sequence is AAALISLTWLIGFLISIPPMLG. Topologically, residues 175–193 are extracellular; sequence WRTPEDRSDPDACTISKDH. Residues 194-216 traverse the membrane as a helical segment; the sequence is GYTIYSTFGAFYIPLLLMLVLYG. Over 217–346 the chain is Cytoplasmic; that stretch reads RIFRAARFRI…LARERKTVKT (130 aa). The tract at residues 235–262 is disordered; the sequence is KTGADTRHGASPAPQPKKSVNGESGSRN. 4 residues coordinate 1D-myo-inositol 4-phosphate: Thr314, Lys345, Thr346, and Gly352. A helical transmembrane segment spans residues 347–370; it reads LGIIMGTFILCWLPFFIVALVLPF. At 371 to 378 the chain is on the extracellular side; the sequence is CESSCHMP. The helical transmembrane segment at 379–403 threads the bilayer; the sequence is TLLGAIINWLGYSNSLLNPVIYAYF. An NPxxY motif; important for ligand-induced conformation changes and signaling motif is present at residues 396 to 400; that stretch reads NPVIY. 1D-myo-inositol 4-phosphate-binding residues include Phe403, Asn404, and Lys405. The Cytoplasmic segment spans residues 404–422; the sequence is NKDFQNAFKKIIKCKFCRQ.

This sequence belongs to the G-protein coupled receptor 1 family. 5-hydroxytryptamine receptor subfamily. HTR1A sub-subfamily. Heterodimer; heterodimerizes with GPER1. Interacts with YIF1B. Interacts with GPR39 and GALR1.

The protein resides in the cell membrane. It localises to the cell projection. Its subcellular location is the dendrite. G-protein coupled receptor activity is regulated by lipids: phosphatidylinositol 4-phosphate increases HTR1A-mediated activity. Its function is as follows. G-protein coupled receptor for 5-hydroxytryptamine (serotonin). Also functions as a receptor for various drugs and psychoactive substances. Ligand binding causes a conformation change that triggers signaling via guanine nucleotide-binding proteins (G proteins) and modulates the activity of downstream effectors, such as adenylate cyclase. HTR1A is coupled to G(i)/G(o) G alpha proteins and mediates inhibitory neurotransmission: signaling inhibits adenylate cyclase activity and activates a phosphatidylinositol-calcium second messenger system that regulates the release of Ca(2+) ions from intracellular stores. Beta-arrestin family members regulate signaling by mediating both receptor desensitization and resensitization processes. The sequence is that of 5-hydroxytryptamine receptor 1A (HTR1A) from Gorilla gorilla gorilla (Western lowland gorilla).